The following is an 86-amino-acid chain: MANIKSSKKHISISEKRRKYNCSKRSMIKTFMKKVLFFIKEKNRIKAIKFFYIFQSLVDRYSLKKIIHINKASRYKSVLMNNIKKI.

Belongs to the bacterial ribosomal protein bS20 family.

Its function is as follows. Binds directly to 16S ribosomal RNA. This Buchnera aphidicola subsp. Cinara cedri (strain Cc) protein is Small ribosomal subunit protein bS20.